An 83-amino-acid chain; its full sequence is Cytochrome b559 subunit alpha (83 aa).

A helical transmembrane segment spans residues 21 to 35 (VIHSITIPSLFIAGW). H23 lines the heme pocket.

The protein belongs to the PsbE/PsbF family. Heterodimer of an alpha subunit and a beta subunit. PSII is composed of 1 copy each of membrane proteins PsbA, PsbB, PsbC, PsbD, PsbE, PsbF, PsbH, PsbI, PsbJ, PsbK, PsbL, PsbM, PsbT, PsbX, PsbY, PsbZ, Psb30/Ycf12, at least 3 peripheral proteins of the oxygen-evolving complex and a large number of cofactors. It forms dimeric complexes. Requires heme b as cofactor.

It localises to the plastid. Its subcellular location is the chloroplast thylakoid membrane. Its function is as follows. This b-type cytochrome is tightly associated with the reaction center of photosystem II (PSII). PSII is a light-driven water:plastoquinone oxidoreductase that uses light energy to abstract electrons from H(2)O, generating O(2) and a proton gradient subsequently used for ATP formation. It consists of a core antenna complex that captures photons, and an electron transfer chain that converts photonic excitation into a charge separation. The protein is Cytochrome b559 subunit alpha of Chara vulgaris (Common stonewort).